Consider the following 151-residue polypeptide: Protein-export protein SecB (151 aa).

It belongs to the SecB family. As to quaternary structure, homotetramer, a dimer of dimers. One homotetramer interacts with 1 SecA dimer.

The protein localises to the cytoplasm. Functionally, one of the proteins required for the normal export of preproteins out of the cell cytoplasm. It is a molecular chaperone that binds to a subset of precursor proteins, maintaining them in a translocation-competent state. It also specifically binds to its receptor SecA. The protein is Protein-export protein SecB of Acinetobacter baylyi (strain ATCC 33305 / BD413 / ADP1).